The following is a 152-amino-acid chain: Ribosome maturation factor RimP (152 aa).

It belongs to the RimP family.

The protein localises to the cytoplasm. Functionally, required for maturation of 30S ribosomal subunits. The protein is Ribosome maturation factor RimP of Aeromonas salmonicida (strain A449).